We begin with the raw amino-acid sequence, 217 residues long: MQLFLDTTDVAVLKDLAATGLVDGVTTNPSLIAKSGRNMLEVIAEICGIVEGPVSAEVAGTDVHTMLAEGRKLAGVAPNVVVKVPLTREGLIATSEFCAEGIQTNVTLCFSAAQALLAAKAGATYISPFIGRLDDHGAEGMDLISEIRAIYDNYDFDTEILAASIRTSAHVKEAALAGADCATIPPDVFQALFKHPLTEKGLQQFLADWAKTGQSIL.

The Schiff-base intermediate with substrate role is filled by lysine 83.

The protein belongs to the transaldolase family. Type 3B subfamily.

It is found in the cytoplasm. It catalyses the reaction D-sedoheptulose 7-phosphate + D-glyceraldehyde 3-phosphate = D-erythrose 4-phosphate + beta-D-fructose 6-phosphate. It functions in the pathway carbohydrate degradation; pentose phosphate pathway; D-glyceraldehyde 3-phosphate and beta-D-fructose 6-phosphate from D-ribose 5-phosphate and D-xylulose 5-phosphate (non-oxidative stage): step 2/3. Transaldolase is important for the balance of metabolites in the pentose-phosphate pathway. In Phenylobacterium zucineum (strain HLK1), this protein is Probable transaldolase.